Here is a 207-residue protein sequence, read N- to C-terminus: Nitrile hydratase subunit alpha (207 aa).

Fe(3+) contacts are provided by Cys-110, Cys-113, Ser-114, and Cys-115. Cys-113 is modified (cysteine sulfinic acid (-SO2H)). Cys-115 is subject to Cysteine sulfenic acid (-SOH).

Belongs to the nitrile hydratase subunit alpha family. Heterodimer of an alpha and a beta chain. It depends on Fe(3+) as a cofactor. In terms of processing, oxidation on Cys-113 is essential for the activity. Post-translationally, oxidation on Cys-115 stabilizes the Fe-NO ligand coordinated in the inactive form.

The catalysed reaction is an aliphatic primary amide = an aliphatic nitrile + H2O. Inactivated by nitrosylation of the iron center in the dark and activated by photo-induced nitric oxide (NO) release. Inactivated by oxidation of Cys-115 to a sulfenic acid. NHase catalyzes the hydration of various nitrile compounds to the corresponding amides. Industrial production of acrylamide is now being developed using some of the enzymes of this class. In Rhodococcus erythropolis (Arthrobacter picolinophilus), this protein is Nitrile hydratase subunit alpha (nthA).